The primary structure comprises 232 residues: Sugar fermentation stimulation protein homolog (232 aa).

Belongs to the SfsA family.

The protein is Sugar fermentation stimulation protein homolog of Shouchella clausii (strain KSM-K16) (Alkalihalobacillus clausii).